Consider the following 465-residue polypeptide: Hepatocyte nuclear factor 6 (465 aa).

Disordered stretches follow at residues serine 17 to methionine 55, aspartate 120 to leucine 141, leucine 264 to glutamate 290, and aspartate 442 to alanine 465. Residues proline 123–arginine 140 show a composition bias toward basic residues. A compositionally biased stretch (polar residues) spans proline 273–glutamine 288. The CUT DNA-binding region spans glycine 283–alanine 369. A DNA-binding region (homeobox) is located at residues proline 385–tryptophan 444. Residues glycine 448 to alanine 465 are compositionally biased toward low complexity.

The protein belongs to the CUT homeobox family. As to quaternary structure, binds DNA as a monomer. Highly expressed in liver; lower expression in testis and skin.

Its subcellular location is the nucleus. Its function is as follows. Transcriptional activator. Binds the consensus sequence 5'-DHWATTGAYTWWD-3' on a variety of gene promoters such as those of HNF3B and TTR. Important for liver genes transcription. This is Hepatocyte nuclear factor 6 (ONECUT1) from Homo sapiens (Human).